The primary structure comprises 139 residues: MSTVSQLIKKRRSSKTSKTKAPALSYGFNVLQKKAKHYSSPQKMGVCLRVTTMTPKKPNSALRKFARVRLSNGSEVTAYIPGVGHSLQEHSSVLVRGGRVKDLPGVRYHIVRGALDATGVANRKQGRSKYGSKLPKEKK.

Residues 1-21 (MSTVSQLIKKRRSSKTSKTKA) form a disordered region. Residues 8–18 (IKKRRSSKTSK) are compositionally biased toward basic residues.

This sequence belongs to the universal ribosomal protein uS12 family. In terms of assembly, part of the 30S ribosomal subunit. Contacts proteins S8 and S17. May interact with IF1 in the 30S initiation complex.

With S4 and S5 plays an important role in translational accuracy. In terms of biological role, interacts with and stabilizes bases of the 16S rRNA that are involved in tRNA selection in the A site and with the mRNA backbone. Located at the interface of the 30S and 50S subunits, it traverses the body of the 30S subunit contacting proteins on the other side and probably holding the rRNA structure together. The combined cluster of proteins S8, S12 and S17 appears to hold together the shoulder and platform of the 30S subunit. The chain is Small ribosomal subunit protein uS12 from Onion yellows phytoplasma (strain OY-M).